Here is a 147-residue protein sequence, read N- to C-terminus: Cytochrome c-type biogenesis protein CcmE (147 aa).

The Cytoplasmic segment spans residues 1–9 (MKSLKKQRR). The helical; Signal-anchor for type II membrane protein transmembrane segment at 10 to 30 (IQIIALATVALVGSTALIGYA) threads the bilayer. At 31–147 (MRDGINYFRS…EQGVYREGDS (117 aa)) the chain is on the periplasmic side. Residues histidine 123 and tyrosine 127 each contribute to the heme site.

It belongs to the CcmE/CycJ family.

Its subcellular location is the cell inner membrane. In terms of biological role, heme chaperone required for the biogenesis of c-type cytochromes. Transiently binds heme delivered by CcmC and transfers the heme to apo-cytochromes in a process facilitated by CcmF and CcmH. The protein is Cytochrome c-type biogenesis protein CcmE of Ruegeria sp. (strain TM1040) (Silicibacter sp.).